The chain runs to 508 residues: NADH-quinone oxidoreductase subunit N 2 (508 aa).

14 helical membrane passes run 14 to 34 (SYVA…VIVL), 43 to 63 (SLVW…WYTA), 90 to 110 (FTFF…LLSA), 119 to 139 (GAHM…MFMV), 144 to 164 (LLTI…LAGI), 179 to 199 (FLTG…IYGV), 223 to 243 (GPAL…GFGF), 275 to 295 (GAAM…APFT), 298 to 318 (WALI…LVAL), 327 to 347 (MAYS…ASGL), 353 to 373 (ISSV…IFAV), 400 to 420 (AWAL…VGFL), 433 to 455 (GYLW…YYRV), and 473 to 493 (TGIS…TIFA).

Belongs to the complex I subunit 2 family. NDH-1 is composed of 14 different subunits. Subunits NuoA, H, J, K, L, M, N constitute the membrane sector of the complex.

The protein localises to the cell membrane. The enzyme catalyses a quinone + NADH + 5 H(+)(in) = a quinol + NAD(+) + 4 H(+)(out). Functionally, NDH-1 shuttles electrons from NADH, via FMN and iron-sulfur (Fe-S) centers, to quinones in the respiratory chain. The immediate electron acceptor for the enzyme in this species is believed to be a menaquinone. Couples the redox reaction to proton translocation (for every two electrons transferred, four hydrogen ions are translocated across the cytoplasmic membrane), and thus conserves the redox energy in a proton gradient. In Symbiobacterium thermophilum (strain DSM 24528 / JCM 14929 / IAM 14863 / T), this protein is NADH-quinone oxidoreductase subunit N 2.